Here is a 153-residue protein sequence, read N- to C-terminus: Fucose mutarotase (153 aa).

His-24 acts as the Proton donor in catalysis. Position 32 (Asp-32) interacts with substrate. Residue Asp-69 is part of the active site. Residues Met-79, Tyr-119, Tyr-137, and Asn-139 each coordinate substrate. Tyr-119 is an active-site residue.

This sequence belongs to the RbsD / FucU family. Mainly homodimer, but also exists as homotetramer, homooctamer, and homodecamer. The homodimeric form seems catalytically inactive.

It carries out the reaction alpha-L-fucose = beta-L-fucose. The protein operates within carbohydrate metabolism; L-fucose metabolism. Functionally, involved in the interconversion between alpha- and beta-L-fucoses. L-Fucose (6-deoxy-L-galactose) exists as alpha-L-fucose (29.5%) and beta-L-fucose (70.5%), the beta-form is metabolized through the salvage pathway. GDP-L-fucose formed either by the de novo or salvage pathways is transported into the endoplasmic reticulum, where it serves as a substrate for N- and O-glycosylations by fucosyltransferases. Fucosylated structures expressed on cell surfaces or secreted in biological fluids are believed to play a critical role in cell-cell adhesion and recognition processes. The sequence is that of Fucose mutarotase (FUOM) from Bos taurus (Bovine).